Reading from the N-terminus, the 205-residue chain is Holliday junction branch migration complex subunit RuvA (205 aa).

Residues 1–64 (MIGHIQGVLT…EDAQLLYGFI (64 aa)) are domain I. Residues 65 to 143 (SASERSLFRL…DWQPSTPFTD (79 aa)) are domain II. Residues 136–157 (QPSTPFTDRAPLDSQGMDAREH) form a disordered region. The segment at 144 to 156 (RAPLDSQGMDARE) is flexible linker. The domain III stretch occupies residues 157–205 (HPADARTDAISALQSLGYKENQAEKALQKVYSAEHNSETLIRLALKQLS).

Belongs to the RuvA family. Homotetramer. Forms an RuvA(8)-RuvB(12)-Holliday junction (HJ) complex. HJ DNA is sandwiched between 2 RuvA tetramers; dsDNA enters through RuvA and exits via RuvB. An RuvB hexamer assembles on each DNA strand where it exits the tetramer. Each RuvB hexamer is contacted by two RuvA subunits (via domain III) on 2 adjacent RuvB subunits; this complex drives branch migration. In the full resolvosome a probable DNA-RuvA(4)-RuvB(12)-RuvC(2) complex forms which resolves the HJ.

Its subcellular location is the cytoplasm. The RuvA-RuvB-RuvC complex processes Holliday junction (HJ) DNA during genetic recombination and DNA repair, while the RuvA-RuvB complex plays an important role in the rescue of blocked DNA replication forks via replication fork reversal (RFR). RuvA specifically binds to HJ cruciform DNA, conferring on it an open structure. The RuvB hexamer acts as an ATP-dependent pump, pulling dsDNA into and through the RuvAB complex. HJ branch migration allows RuvC to scan DNA until it finds its consensus sequence, where it cleaves and resolves the cruciform DNA. The chain is Holliday junction branch migration complex subunit RuvA from Idiomarina loihiensis (strain ATCC BAA-735 / DSM 15497 / L2-TR).